A 352-amino-acid chain; its full sequence is ADP-ribosylation factor GTPase-activating protein GCS1 (352 aa).

The 117-residue stretch at 11–127 (RRRLLQLQKI…LTCLCEDRVF (117 aa)) folds into the Arf-GAP domain. Residues 26 to 49 (CMDCGAPNPQWATPKFGAFICLEC) form a C4-type zinc finger. Over residues 138-151 (SKLSATSQTAASAT) the composition is skewed to low complexity. 2 disordered regions span residues 138–181 (SKLS…ANFQ) and 196–231 (NQSR…GSSN). At Thr151 the chain carries Phosphothreonine. Position 157 is a phosphoserine (Ser157). At Thr161 the chain carries Phosphothreonine. Ser168 is subject to Phosphoserine. Over residues 168–179 (SATPANSSNGAN) the composition is skewed to polar residues. Thr170 is subject to Phosphothreonine. The residue at position 260 (Ser260) is a Phosphoserine. The segment covering 315–330 (NGNAEDSSTAGNTTHT) has biased composition (polar residues). Residues 315 to 352 (NGNAEDSSTAGNTTHTEYQKIDNNDKKNEQDEDKWDDF) form a disordered region. Positions 331–343 (EYQKIDNNDKKNE) are enriched in basic and acidic residues.

Its subcellular location is the cytoplasm. The protein resides in the mitochondrion. It localises to the perinuclear region. It is found in the golgi apparatus. Its function is as follows. GTPase-activating protein (GAP) for ARF1 and ARF2. Involved in intracellular vesicular transport. Required for transport from the trans-Golgi network. Implicated in the regulation of retrograde transport from the Golgi to the ER and in actin cytoskeletal organization. May be involved in the maintenance of mitochondrial morphology, possibly through organizing the actin cytoskeleton in Saccharomyces. The chain is ADP-ribosylation factor GTPase-activating protein GCS1 (GCS1) from Saccharomyces cerevisiae (strain ATCC 204508 / S288c) (Baker's yeast).